The sequence spans 558 residues: Serine/threonine-protein phosphatase 2B catalytic subunit (558 aa).

Fe cation contacts are provided by D128, H130, and D156. The Zn(2+) site is built by D156 and N188. Residue H189 is the Proton donor of the active site. Zn(2+) is bound by residues H237 and H319. 2 disordered regions span residues 415–439 (LREDSATTSPGSASPALPSAANQDP) and 534–558 (ALERATREADNDKKLQTLSRRLSTS). A compositionally biased stretch (low complexity) spans 420 to 435 (ATTSPGSASPALPSAA). Residues 534–548 (ALERATREADNDKKL) show a composition bias toward basic and acidic residues. Over residues 549 to 558 (QTLSRRLSTS) the composition is skewed to polar residues.

This sequence belongs to the PPP phosphatase family. PP-2B subfamily. Composed of two components (A and B), the A component is the catalytic subunit and the B component confers calcium sensitivity. It depends on Fe(3+) as a cofactor. Requires Zn(2+) as cofactor.

The enzyme catalyses O-phospho-L-seryl-[protein] + H2O = L-seryl-[protein] + phosphate. It carries out the reaction O-phospho-L-threonyl-[protein] + H2O = L-threonyl-[protein] + phosphate. Functionally, calcium-dependent, calmodulin-stimulated protein phosphatase. This subunit may have a role in the calmodulin activation of calcineurin. The protein is Serine/threonine-protein phosphatase 2B catalytic subunit (cna-1) of Neurospora crassa (strain ATCC 24698 / 74-OR23-1A / CBS 708.71 / DSM 1257 / FGSC 987).